The chain runs to 162 residues: Caveolin-2 (162 aa).

The Cytoplasmic portion of the chain corresponds to 1–86; it reads MGLETEKADV…FEISKYVIYK (86 aa). Tyr-19 is modified (phosphotyrosine; by SRC). Phosphoserine is present on residues Ser-20 and Ser-23. Phosphotyrosine; by SRC is present on Tyr-27. Ser-36 carries the phosphoserine modification. Residues 87-107 constitute an intramembrane region (helical); sequence FLTLFLAIPLAFAAGILFATL. Residues 108-162 lie on the Cytoplasmic side of the membrane; that stretch reads SCLHIWIIMPFVKTCLMVLPSVQTIWKSITDVVIAPLCTSVGRSFSSVSLQLSHD.

This sequence belongs to the caveolin family. In terms of assembly, monomer or homodimer. Interacts with CAV1; the interaction forms a stable heterooligomeric complex that is required for targeting to lipid rafts and for caveolae formation. Tyrosine phosphorylated forms do not form heterooligomers with the Tyr-19-phosphorylated form existing as a monomer or dimer, and the Tyr-27-form as a monomer only. Interacts (tyrosine phosphorylated form) with the SH2 domain-containing proteins, RASA1, NCK1 and SRC. Interacts (tyrosine phosphorylated form) with INSR, the interaction (Tyr-27-phosphorylated form) is increased on insulin stimulation. Interacts (Tyr-19 phosphorylated form) with MAPK1 (phosphorylated form); the interaction, promoted by insulin, leads to nuclear location and MAPK1 activation. Interacts with STAT3; the interaction is increased on insulin-induced tyrosine phosphorylation leading to STAT activation. In terms of processing, phosphorylated on serine and tyrosine residues. CAV1 promotes phosphorylation on Ser-23 which then targets the complex to the plasma membrane, lipid rafts and caveolae. Phosphorylation on Ser-36 appears to modulate mitosis in endothelial cells. Phosphorylation on both Tyr-19 and Tyr-27 is required for insulin-induced 'Ser-727' phosphorylation of STAT3 and its activation. Phosphorylation on Tyr-19 is required for insulin-induced phosphorylation of MAPK1 and DNA binding of STAT3. Tyrosine phosphorylation is induced by both EGF and insulin (By. similarity).

It localises to the nucleus. The protein localises to the cytoplasm. It is found in the golgi apparatus membrane. Its subcellular location is the cell membrane. The protein resides in the membrane. It localises to the caveola. In terms of biological role, may act as a scaffolding protein within caveolar membranes. Interacts directly with G-protein alpha subunits and can functionally regulate their activity. Acts as an accessory protein in conjunction with CAV1 in targeting to lipid rafts and driving caveolae formation. The Ser-36 phosphorylated form has a role in modulating mitosis in endothelial cells. Positive regulator of cellular mitogenesis of the MAPK signaling pathway. Required for the insulin-stimulated nuclear translocation and activation of MAPK1 and STAT3, and the subsequent regulation of cell cycle progression. In Neofelis nebulosa (Clouded leopard), this protein is Caveolin-2 (CAV2).